We begin with the raw amino-acid sequence, 221 residues long: Ribonuclease T (221 aa).

Residues 21-195 (VVIDIESAGF…YDTIQTAYLF (175 aa)) form the Exonuclease domain. 4 residues coordinate Mg(2+): Asp-24, Glu-26, His-182, and Asp-187. His-182 serves as the catalytic Proton donor/acceptor.

It belongs to the RNase T family. In terms of assembly, homodimer. The cofactor is Mg(2+).

Trims short 3' overhangs of a variety of RNA species, leaving a one or two nucleotide 3' overhang. Responsible for the end-turnover of tRNA: specifically removes the terminal AMP residue from uncharged tRNA (tRNA-C-C-A). Also appears to be involved in tRNA biosynthesis. The protein is Ribonuclease T of Buchnera aphidicola subsp. Cinara cedri (strain Cc).